The chain runs to 104 residues: Larval cuticle protein 65Ab1 (104 aa).

A signal peptide spans 1–18 (MKFLIVFVALFAMAVARP). Residues 32–102 (PEKWSSDVET…PQGAHLPVAP (71 aa)) form the Chitin-binding type R&amp;R domain.

In terms of biological role, component of the cuticle of the larva. This Drosophila melanogaster (Fruit fly) protein is Larval cuticle protein 65Ab1.